The primary structure comprises 202 residues: Glycerol-3-phosphate acyltransferase (202 aa).

6 helical membrane passes run 2-22 (MIVI…GYVI), 54-74 (FLVT…PLWL), 88-108 (NGLI…YLGF), 120-140 (VILG…FGIL), 141-161 (YLTK…VIGA), and 162-182 (LLIR…LLII).

Belongs to the PlsY family. In terms of assembly, probably interacts with PlsX.

The protein localises to the cell membrane. The catalysed reaction is an acyl phosphate + sn-glycerol 3-phosphate = a 1-acyl-sn-glycero-3-phosphate + phosphate. It functions in the pathway lipid metabolism; phospholipid metabolism. Its function is as follows. Catalyzes the transfer of an acyl group from acyl-phosphate (acyl-PO(4)) to glycerol-3-phosphate (G3P) to form lysophosphatidic acid (LPA). This enzyme utilizes acyl-phosphate as fatty acyl donor, but not acyl-CoA or acyl-ACP. The sequence is that of Glycerol-3-phosphate acyltransferase from Staphylococcus saprophyticus subsp. saprophyticus (strain ATCC 15305 / DSM 20229 / NCIMB 8711 / NCTC 7292 / S-41).